The primary structure comprises 344 residues: Dihydroorotase (344 aa).

Residues His13 and His15 each contribute to the Zn(2+) site. Substrate contacts are provided by residues 15–17 (HLR) and Asn41. Zn(2+)-binding residues include Lys98, His135, and His173. An N6-carboxylysine modification is found at Lys98. Position 135 (His135) interacts with substrate. Leu218 contributes to the substrate binding site. Asp247 is a binding site for Zn(2+). Residue Asp247 is part of the active site. Substrate is bound by residues His251 and Ala263.

The protein belongs to the metallo-dependent hydrolases superfamily. DHOase family. Class II DHOase subfamily. As to quaternary structure, homodimer. It depends on Zn(2+) as a cofactor.

The catalysed reaction is (S)-dihydroorotate + H2O = N-carbamoyl-L-aspartate + H(+). Its pathway is pyrimidine metabolism; UMP biosynthesis via de novo pathway; (S)-dihydroorotate from bicarbonate: step 3/3. Catalyzes the reversible cyclization of carbamoyl aspartate to dihydroorotate. The chain is Dihydroorotase from Neisseria gonorrhoeae (strain ATCC 700825 / FA 1090).